Here is a 130-residue protein sequence, read N- to C-terminus: Small ribosomal subunit protein uS9 (130 aa).

It belongs to the universal ribosomal protein uS9 family.

This Buchnera aphidicola subsp. Acyrthosiphon pisum (strain Tuc7) protein is Small ribosomal subunit protein uS9.